A 535-amino-acid polypeptide reads, in one-letter code: Flavin-containing monooxygenase 2 (535 aa).

Ala-2 is subject to N-acetylalanine. FAD-binding positions include 9–13 (GAGVS), Glu-32, 40–41 (VW), and 61–62 (NT). NADP(+)-binding positions include 60 to 61 (TN) and 195 to 198 (SGSD). A Glycyl lysine isopeptide (Lys-Gly) (interchain with G-Cter in SUMO) cross-link involves residue Lys-492. The chain crosses the membrane as a helical span at residues 510–530 (FSVSFLLKILGLLAVVVAFFC).

Belongs to the FMO family. FAD serves as cofactor. The cofactor is Mg(2+). As to expression, expressed in lung (at protein level). Expressed predominantly in lung, and at a much lesser extent in kidney. Also expressed in fetal lung, but not in liver, kidney and brain.

It is found in the microsome membrane. The protein resides in the endoplasmic reticulum membrane. Functionally, catalyzes the oxidative metabolism of numerous xenobiotics, including mainly therapeutic drugs and insecticides that contain a soft nucleophile, most commonly nitrogen and sulfur and participates to their bioactivation. Specifically catalyzes S-oxygenation of sulfur derived compounds such as thioureas-derived compounds, thioetherorganophosphates to their sulfenic acid. In vitro, catalyzes S-oxygenation of the second-line antitubercular drugs thiacetazone (TAZ) and ethionamide (ETA), forming a sulfinic acid and a carbodiimide via a postulated sulfenic acid intermediate. Also catalyzes S-oxygenation of the thioether-containing organophosphate insecticides, phorate and disulfoton. The chain is Flavin-containing monooxygenase 2 from Homo sapiens (Human).